A 333-amino-acid polypeptide reads, in one-letter code: Lipoyl synthase (333 aa).

Residues 1 to 15 show a composition bias toward polar residues; sequence MSTLVESPVPSNDSQ. The interval 1-34 is disordered; sequence MSTLVESPVPSNDSQAAAPAAYDPTQKQKSQAKT. 7 residues coordinate [4Fe-4S] cluster: Cys80, Cys85, Cys91, Cys106, Cys110, Cys113, and Ser320. The Radical SAM core domain occupies 91 to 309; the sequence is CFGKGTATFM…EREAYAMGFT (219 aa).

The protein belongs to the radical SAM superfamily. Lipoyl synthase family. [4Fe-4S] cluster is required as a cofactor.

The protein localises to the cytoplasm. The enzyme catalyses [[Fe-S] cluster scaffold protein carrying a second [4Fe-4S](2+) cluster] + N(6)-octanoyl-L-lysyl-[protein] + 2 oxidized [2Fe-2S]-[ferredoxin] + 2 S-adenosyl-L-methionine + 4 H(+) = [[Fe-S] cluster scaffold protein] + N(6)-[(R)-dihydrolipoyl]-L-lysyl-[protein] + 4 Fe(3+) + 2 hydrogen sulfide + 2 5'-deoxyadenosine + 2 L-methionine + 2 reduced [2Fe-2S]-[ferredoxin]. Its pathway is protein modification; protein lipoylation via endogenous pathway; protein N(6)-(lipoyl)lysine from octanoyl-[acyl-carrier-protein]: step 2/2. Functionally, catalyzes the radical-mediated insertion of two sulfur atoms into the C-6 and C-8 positions of the octanoyl moiety bound to the lipoyl domains of lipoate-dependent enzymes, thereby converting the octanoylated domains into lipoylated derivatives. This is Lipoyl synthase from Bordetella parapertussis (strain 12822 / ATCC BAA-587 / NCTC 13253).